The following is a 447-amino-acid chain: CBL-interacting serine/threonine-protein kinase 9 (447 aa).

The region spanning 19-274 (YEMGRTLGEG…IAELLEDEWF (256 aa)) is the Protein kinase domain. Residues 25–33 (LGEGSFAKV) and Lys48 each bind ATP. The active-site Proton acceptor is Asp142. The tract at residues 160–189 (DFGLSAFSRQVREDGLLHTACGTPNYVAPE) is activation loop. Ser164 is subject to Phosphoserine. The residue at position 178 (Thr178) is a Phosphothreonine. Positions 312–336 (EKPVSMNAFELISSSSEFSLENLFE) constitute an NAF domain. The interval 343–372 (KKETRFTSQRSASEIMSKMEETAKPLGFNV) is PPI.

This sequence belongs to the protein kinase superfamily. CAMK Ser/Thr protein kinase family. SNF1 subfamily. In terms of assembly, interacts with CBL2 and CBL3. Mn(2+) serves as cofactor. As to expression, expressed at low levels in roots and shoots. Detected in root vascular bundles and in the leaf vascular tissue and hydathode, but not in root tips.

The protein localises to the cytoplasm. Its subcellular location is the nucleus. It carries out the reaction L-seryl-[protein] + ATP = O-phospho-L-seryl-[protein] + ADP + H(+). The catalysed reaction is L-threonyl-[protein] + ATP = O-phospho-L-threonyl-[protein] + ADP + H(+). Functionally, CIPK serine-threonine protein kinases interact with CBL proteins. Binding of a CBL protein to the regulatory NAF domain of CIPK protein lead to the activation of the kinase in a calcium-dependent manner. Involved in K(+) homeostasis under low-K(+) stress. This is CBL-interacting serine/threonine-protein kinase 9 (CIPK9) from Arabidopsis thaliana (Mouse-ear cress).